The sequence spans 293 residues: Pantothenate synthetase (293 aa).

Residue 30-37 participates in ATP binding; that stretch reads MGYLHKGH. Residue H37 is the Proton donor of the active site. Q61 lines the (R)-pantoate pocket. Q61 is a binding site for beta-alanine. 147 to 150 provides a ligand contact to ATP; sequence GEKD. Q153 is a binding site for (R)-pantoate. ATP is bound by residues V176 and 184–187; that span reads CSSR.

It belongs to the pantothenate synthetase family. In terms of assembly, homodimer.

Its subcellular location is the cytoplasm. It carries out the reaction (R)-pantoate + beta-alanine + ATP = (R)-pantothenate + AMP + diphosphate + H(+). The protein operates within cofactor biosynthesis; (R)-pantothenate biosynthesis; (R)-pantothenate from (R)-pantoate and beta-alanine: step 1/1. In terms of biological role, catalyzes the condensation of pantoate with beta-alanine in an ATP-dependent reaction via a pantoyl-adenylate intermediate. This Brucella abortus (strain S19) protein is Pantothenate synthetase.